The sequence spans 126 residues: Large ribosomal subunit protein bL12 (126 aa).

A compositionally biased stretch (low complexity) spans 36–55; sequence APAPAAAPAAGGDQGGAEAA. The interval 36-57 is disordered; the sequence is APAPAAAPAAGGDQGGAEAAEQ.

This sequence belongs to the bacterial ribosomal protein bL12 family. Homodimer. Part of the ribosomal stalk of the 50S ribosomal subunit. Forms a multimeric L10(L12)X complex, where L10 forms an elongated spine to which 2 to 4 L12 dimers bind in a sequential fashion. Binds GTP-bound translation factors.

Its function is as follows. Forms part of the ribosomal stalk which helps the ribosome interact with GTP-bound translation factors. Is thus essential for accurate translation. This Natranaerobius thermophilus (strain ATCC BAA-1301 / DSM 18059 / JW/NM-WN-LF) protein is Large ribosomal subunit protein bL12.